A 257-amino-acid chain; its full sequence is Probable ssDNA-binding protein (257 aa).

Residues 222-257 (AFMEGRENKDDDAKSGNSNAGSQKGIDQEAASDLDD) are disordered. Residues 225 to 235 (EGRENKDDDAK) show a composition bias toward basic and acidic residues.

In terms of biological role, required during DNA replication. Displaced viral DNA strands are transiently coated with the ssDNA-binding protein. It is then probably removed by the replisome that performs lagging strand synthesis or during the events that lead up to the recombination process. In Escherichia phage T5 (Enterobacteria phage T5), this protein is Probable ssDNA-binding protein (D11).